A 322-amino-acid polypeptide reads, in one-letter code: Arginase-1 (322 aa).

The segment covering 1 to 12 (MSSKSKSIGIIG) has biased composition (low complexity). A disordered region spans residues 1-26 (MSSKSKSIGIIGAPFSKGQPRGGVEE). Phosphoserine is present on Ser-7. N6-succinyllysine is present on Lys-17. The residue at position 62 (Ser-62) is a Phosphoserine. Positions 101, 124, 126, and 128 each coordinate Mn(2+). Residues 126–130 (HTDIN) and 137–139 (SGN) each bind substrate. Residue Ser-163 is modified to Phosphoserine. Asp-183 is a substrate binding site. Mn(2+)-binding residues include Asp-232 and Asp-234. Residues Thr-246 and Glu-277 each coordinate substrate.

It belongs to the arginase family. Homotrimer. Interacts with CMTM6. Mn(2+) serves as cofactor.

It localises to the cytoplasm. It carries out the reaction L-arginine + H2O = urea + L-ornithine. It functions in the pathway nitrogen metabolism; urea cycle; L-ornithine and urea from L-arginine: step 1/1. In Oryctolagus cuniculus (Rabbit), this protein is Arginase-1 (ARG1).